We begin with the raw amino-acid sequence, 802 residues long: Outer membrane usher protein PefC (802 aa).

The signal sequence occupies residues 1–24; sequence MSFHHRVFKLSALSLALFSHLSFA. Cysteines 782 and 801 form a disulfide.

The protein belongs to the fimbrial export usher family.

The protein localises to the cell outer membrane. Its function is as follows. Involved in the export and assembly of FimA fimbrial subunits across the outer membrane. The sequence is that of Outer membrane usher protein PefC (pefC) from Salmonella typhimurium (strain LT2 / SGSC1412 / ATCC 700720).